We begin with the raw amino-acid sequence, 134 residues long: 6,7-dimethyl-8-ribityllumazine synthase (134 aa).

5-amino-6-(D-ribitylamino)uracil is bound by residues F12, 44 to 46 (VFD), and 68 to 70 (SVI). 73-74 (DT) provides a ligand contact to (2S)-2-hydroxy-3-oxobutyl phosphate. H76 serves as the catalytic Proton donor. L101 serves as a coordination point for 5-amino-6-(D-ribitylamino)uracil. A (2S)-2-hydroxy-3-oxobutyl phosphate-binding site is contributed by R116.

This sequence belongs to the DMRL synthase family.

The enzyme catalyses (2S)-2-hydroxy-3-oxobutyl phosphate + 5-amino-6-(D-ribitylamino)uracil = 6,7-dimethyl-8-(1-D-ribityl)lumazine + phosphate + 2 H2O + H(+). It functions in the pathway cofactor biosynthesis; riboflavin biosynthesis; riboflavin from 2-hydroxy-3-oxobutyl phosphate and 5-amino-6-(D-ribitylamino)uracil: step 1/2. Catalyzes the formation of 6,7-dimethyl-8-ribityllumazine by condensation of 5-amino-6-(D-ribitylamino)uracil with 3,4-dihydroxy-2-butanone 4-phosphate. This is the penultimate step in the biosynthesis of riboflavin. This is 6,7-dimethyl-8-ribityllumazine synthase from Methanosarcina barkeri (strain Fusaro / DSM 804).